Reading from the N-terminus, the 172-residue chain is Disulfide bond formation protein B (172 aa).

Topologically, residues 1-11 (MNPFRWSFRAQ) are cytoplasmic. Residues 12 to 28 (FLLGFLACAGLLAYAIY) form a helical membrane-spanning segment. Topologically, residues 29–46 (VQLHLGLEPCPLCIFQRI) are periplasmic. Cysteine 38 and cysteine 41 are oxidised to a cystine. The helical transmembrane segment at 47 to 63 (AFAALAMFFLLGALHGP) threads the bilayer. At 64–70 (RAAAGRK) the chain is on the cytoplasmic side. The helical transmembrane segment at 71–88 (VYGVLSFIAAGVGMGIAA) threads the bilayer. Over 89–145 (RHVWVQIRPKDMMSSCGPPLSFLSETMGPFEVFRTVLTGTGDCGNIDWRFLGLSMPM) the chain is Periplasmic. Cysteine 104 and cysteine 131 are disulfide-bonded. A helical membrane pass occupies residues 146-164 (WSMVWFVGLALWALYAGFK). Residues 165–172 (ARRSSVHH) are Cytoplasmic-facing.

The protein belongs to the DsbB family.

It localises to the cell inner membrane. Required for disulfide bond formation in some periplasmic proteins. Acts by oxidizing the DsbA protein. The polypeptide is Disulfide bond formation protein B (Xanthomonas euvesicatoria pv. vesicatoria (strain 85-10) (Xanthomonas campestris pv. vesicatoria)).